Reading from the N-terminus, the 441-residue chain is Mitochondrial distribution and morphology protein 12 (441 aa).

Residues 1–441 form the SMP-LTD domain; the sequence is MSIDIDWERA…VYPSFWTFLV (441 aa). Disordered regions lie at residues 70–89 and 180–289; these read YEDG…PMRE and TPLR…RMRE. Polar residues-rich tracts occupy residues 226-245 and 253-263; these read SRPS…SVST and SSQTVLANNPG.

This sequence belongs to the MDM12 family. In terms of assembly, component of the ER-mitochondria encounter structure (ERMES) or MDM complex, composed of MMM1, MDM10, MDM12 and MDM34. An MMM1 homodimer associates with one molecule of MDM12 on each side in a pairwise head-to-tail manner, and the SMP-LTD domains of MMM1 and MDM12 generate a continuous hydrophobic tunnel for phospholipid trafficking.

The protein localises to the mitochondrion outer membrane. The protein resides in the endoplasmic reticulum membrane. Its function is as follows. Component of the ERMES/MDM complex, which serves as a molecular tether to connect the endoplasmic reticulum (ER) and mitochondria. Components of this complex are involved in the control of mitochondrial shape and protein biogenesis, and function in nonvesicular lipid trafficking between the ER and mitochondria. MDM12 is required for the interaction of the ER-resident membrane protein MMM1 and the outer mitochondrial membrane-resident beta-barrel protein MDM10. The MDM12-MMM1 subcomplex functions in the major beta-barrel assembly pathway that is responsible for biogenesis of all mitochondrial outer membrane beta-barrel proteins, and acts in a late step after the SAM complex. The MDM10-MDM12-MMM1 subcomplex further acts in the TOM40-specific pathway after the action of the MDM12-MMM1 complex. Essential for establishing and maintaining the structure of mitochondria and maintenance of mtDNA nucleoids. The chain is Mitochondrial distribution and morphology protein 12 from Paracoccidioides brasiliensis (strain Pb03).